Reading from the N-terminus, the 101-residue chain is CRISPR-associated endoribonuclease Cas2 (101 aa).

Aspartate 8 lines the Mg(2+) pocket.

Belongs to the CRISPR-associated endoribonuclease Cas2 protein family. In terms of assembly, homodimer, forms a heterotetramer with a Cas1 homodimer. It depends on Mg(2+) as a cofactor.

Its function is as follows. CRISPR (clustered regularly interspaced short palindromic repeat), is an adaptive immune system that provides protection against mobile genetic elements (viruses, transposable elements and conjugative plasmids). CRISPR clusters contain sequences complementary to antecedent mobile elements and target invading nucleic acids. CRISPR clusters are transcribed and processed into CRISPR RNA (crRNA). Functions as a ssRNA-specific endoribonuclease. Involved in the integration of spacer DNA into the CRISPR cassette. In Lacticaseibacillus rhamnosus (strain ATCC 53103 / LMG 18243 / GG) (Lactobacillus rhamnosus), this protein is CRISPR-associated endoribonuclease Cas2.